The following is a 62-amino-acid chain: Small ribosomal subunit protein uS14 (62 aa).

Positions 25, 28, 41, and 44 each coordinate Zn(2+).

Belongs to the universal ribosomal protein uS14 family. Zinc-binding uS14 subfamily. Part of the 30S ribosomal subunit. Contacts proteins S3 and S10. Zn(2+) is required as a cofactor.

Functionally, binds 16S rRNA, required for the assembly of 30S particles and may also be responsible for determining the conformation of the 16S rRNA at the A site. The polypeptide is Small ribosomal subunit protein uS14 (Hydrogenobaculum sp. (strain Y04AAS1)).